The chain runs to 234 residues: UPF0502 protein Bphyt_5265 (234 aa).

This sequence belongs to the UPF0502 family.

This chain is UPF0502 protein Bphyt_5265, found in Paraburkholderia phytofirmans (strain DSM 17436 / LMG 22146 / PsJN) (Burkholderia phytofirmans).